Here is a 385-residue protein sequence, read N- to C-terminus: GDP-mannose-dependent alpha-(1-6)-phosphatidylinositol monomannoside mannosyltransferase (385 aa).

GDP-alpha-D-mannose is bound by residues R205, K210, V262, and E299.

Belongs to the glycosyltransferase group 1 family. Glycosyltransferase 4 subfamily.

The catalysed reaction is a 1,2-diacyl-sn-glycero-3-phospho-[alpha-D-mannopyranosyl-(1&lt;-&gt;6)-D-myo-inositol] + GDP-alpha-D-mannose = a 2,6-O-bis(alpha-D-mannopyranosyl)-1-phosphatidyl-1D-myo-inositol + GDP + H(+). It carries out the reaction a 1,2-diacyl-sn-glycero-3-phospho-[alpha-D-6-acyl-mannopyranosyl-(1&lt;-&gt;6)-D-myo-inositol] + GDP-alpha-D-mannose = a 2-O-(alpha-D-mannosyl)-6-O-(6-O-acyl-alpha-D-mannosyl)-1-phosphatidyl-1D-myo-inositol + GDP + H(+). It functions in the pathway phospholipid metabolism; phosphatidylinositol metabolism. In terms of biological role, involved in the biosynthesis of phosphatidyl-myo-inositol mannosides (PIM) which are early precursors in the biosynthesis of lipomannans (LM) and lipoarabinomannans (LAM). Catalyzes the addition of a mannosyl residue from GDP-D-mannose (GDP-Man) to the position 6 of a phosphatidyl-myo-inositol bearing an alpha-1,2-linked mannose residue (PIM1) to generate phosphatidyl-myo-inositol bearing alpha-1,2- and alpha-1,6-linked mannose residues (Ac1PIM2). PimB also catalyzes the addition of a mannosyl residue from GDP-Man to the position 6 of phosphatidyl-myo-inositol bearing an acylated alpha-1,2-linked mannose residue (Ac1PIM1) to generate monoacylated phosphatidyl-myo-inositol bearing alpha-1,2- and alpha-1,6-linked mannose residues (Ac1PIM2). The addition of the second mannosyl residue by PimB preferentially occurs before the acylation of the mannosyl residue transferred by PimA. Also able to transfer a mannosyl residue from GDP-Man to the position 6 of a phosphatidyl-myo-inositol (PI), but this reaction is very slow. The chain is GDP-mannose-dependent alpha-(1-6)-phosphatidylinositol monomannoside mannosyltransferase from Mycobacterium tuberculosis (strain CDC 1551 / Oshkosh).